A 138-amino-acid polypeptide reads, in one-letter code: Putative acyl-CoA thioesterase YneP (138 aa).

The active site involves aspartate 16.

The protein belongs to the 4-hydroxybenzoyl-CoA thioesterase family.

Functionally, has acyl-CoA thioesterase activity. This Bacillus subtilis (strain 168) protein is Putative acyl-CoA thioesterase YneP (yneP).